The sequence spans 622 residues: 1-deoxy-D-xylulose-5-phosphate synthase (622 aa).

Residues His-71 and 112-114 contribute to the thiamine diphosphate site; that span reads GHS. Residue Asp-143 coordinates Mg(2+). Thiamine diphosphate contacts are provided by residues 144-145, Asn-172, Tyr-283, and Glu-363; that span reads GA. Asn-172 contributes to the Mg(2+) binding site.

It belongs to the transketolase family. DXPS subfamily. Homodimer. The cofactor is Mg(2+). Thiamine diphosphate serves as cofactor.

It carries out the reaction D-glyceraldehyde 3-phosphate + pyruvate + H(+) = 1-deoxy-D-xylulose 5-phosphate + CO2. Its pathway is metabolic intermediate biosynthesis; 1-deoxy-D-xylulose 5-phosphate biosynthesis; 1-deoxy-D-xylulose 5-phosphate from D-glyceraldehyde 3-phosphate and pyruvate: step 1/1. Its function is as follows. Catalyzes the acyloin condensation reaction between C atoms 2 and 3 of pyruvate and glyceraldehyde 3-phosphate to yield 1-deoxy-D-xylulose-5-phosphate (DXP). The polypeptide is 1-deoxy-D-xylulose-5-phosphate synthase (Caldanaerobacter subterraneus subsp. tengcongensis (strain DSM 15242 / JCM 11007 / NBRC 100824 / MB4) (Thermoanaerobacter tengcongensis)).